Reading from the N-terminus, the 62-residue chain is Large ribosomal subunit protein bL32 (62 aa).

A compositionally biased stretch (basic residues) spans 1–19 (MAVPKRKTSKTRRDKRRAS). Residues 1–20 (MAVPKRKTSKTRRDKRRASS) are disordered.

It belongs to the bacterial ribosomal protein bL32 family.

The polypeptide is Large ribosomal subunit protein bL32 (Finegoldia magna (strain ATCC 29328 / DSM 20472 / WAL 2508) (Peptostreptococcus magnus)).